The following is a 132-amino-acid chain: Agouti-signaling protein (132 aa).

The N-terminal stretch at 1 to 22 is a signal peptide; that stretch reads MDVTRLLLATLLVFLCFFTAYS. N-linked (GlcNAc...) asparagine glycosylation is present at asparagine 39. Positions 61–87 are disordered; sequence QISRKEAEKKRSSKKEASMKKVARPRT. Residues 63 to 79 are compositionally biased toward basic and acidic residues; it reads SRKEAEKKRSSKKEASM. 5 disulfide bridges follow: cysteine 93/cysteine 108, cysteine 100/cysteine 114, cysteine 107/cysteine 125, cysteine 111/cysteine 132, and cysteine 116/cysteine 123. The Agouti domain maps to 93-132; the sequence is CVATRDSCKPPAPACCDPCASCQCRFFRSACSCRVLSLNC.

Its subcellular location is the secreted. In terms of biological role, involved in the regulation of melanogenesis. The binding of ASP to MC1R precludes alpha-MSH initiated signaling and thus blocks production of cAMP, leading to a down-regulation of eumelanogenesis (brown/black pigment) and thus increasing synthesis of pheomelanin (yellow/red pigment). The sequence is that of Agouti-signaling protein (ASIP) from Macaca maura (Moor macaque).